The sequence spans 697 residues: Protein Niban 3 (697 aa).

The interval 1 to 48 is disordered; the sequence is MGPDRKEVPLSRGTQAVVVGKGRGAPGDDSSMGGRPSSPLDKQQRQHL.

The protein belongs to the Niban family. As to expression, specifically expressed in B-lymphocytes.

This is Protein Niban 3 from Homo sapiens (Human).